A 140-amino-acid chain; its full sequence is Ribosome maturation factor RimP (140 aa).

It belongs to the RimP family.

The protein localises to the cytoplasm. In terms of biological role, required for maturation of 30S ribosomal subunits. In Campylobacter lari (strain RM2100 / D67 / ATCC BAA-1060), this protein is Ribosome maturation factor RimP.